Reading from the N-terminus, the 150-residue chain is UPF0756 membrane protein HI_1074 (150 aa).

Helical transmembrane passes span 1-21, 52-72, 81-101, and 123-143; these read MTLQLNTIALLLVILLILGVL, YGVKIGIIILTIGVLSPLVSG, GFLSWKMALSISVGVLVAWLA, and IIGVAFLGGIPVGPLIAAGIL.

It belongs to the UPF0756 family.

The protein resides in the cell membrane. This chain is UPF0756 membrane protein HI_1074, found in Haemophilus influenzae (strain ATCC 51907 / DSM 11121 / KW20 / Rd).